Consider the following 349-residue polypeptide: N-acetyl-gamma-glutamyl-phosphate reductase (349 aa).

Cys-149 is an active-site residue.

This sequence belongs to the NAGSA dehydrogenase family. Type 1 subfamily.

Its subcellular location is the cytoplasm. The catalysed reaction is N-acetyl-L-glutamate 5-semialdehyde + phosphate + NADP(+) = N-acetyl-L-glutamyl 5-phosphate + NADPH + H(+). It functions in the pathway amino-acid biosynthesis; L-arginine biosynthesis; N(2)-acetyl-L-ornithine from L-glutamate: step 3/4. Its function is as follows. Catalyzes the NADPH-dependent reduction of N-acetyl-5-glutamyl phosphate to yield N-acetyl-L-glutamate 5-semialdehyde. The polypeptide is N-acetyl-gamma-glutamyl-phosphate reductase (Acinetobacter baylyi (strain ATCC 33305 / BD413 / ADP1)).